Reading from the N-terminus, the 361-residue chain is AT-hook motif nuclear-localized protein 12 (361 aa).

Disordered stretches follow at residues 29 to 143 (SQVA…GRKQ) and 286 to 361 (NNKT…LTRG). Positions 48-59 (SNPNIHHPQANN) are enriched in polar residues. Over residues 85–95 (QPPPPPPPPEE) the composition is skewed to pro residues. The Bipartite nuclear localization signal motif lies at 99–107 (KRKRGRPRK). 2 consecutive DNA-binding regions (a.T hook) follow at residues 99–111 (KRKR…YGEP) and 130–142 (KRAR…TGRK). A PPC domain is found at 154-297 (TSAGLAFAPH…KTIRQEKEPN (144 aa)). Residues 306-322 (ETTPGSAAEPAASAGQQ) are compositionally biased toward low complexity.

Homodimer. Interacts with AHL27, AHL29 and ATAF2/NAC081.

Its subcellular location is the nucleus. Its function is as follows. Transcription factor that specifically binds AT-rich DNA sequences related to the nuclear matrix attachment regions (MARs). The chain is AT-hook motif nuclear-localized protein 12 from Arabidopsis thaliana (Mouse-ear cress).